The sequence spans 519 residues: Acetylcholine receptor subunit gamma (519 aa).

The signal sequence occupies residues 1-22; the sequence is MHGGQGPQLLLLLLATCLGAQS. Topologically, residues 23–240 are extracellular; sequence RNQEERLLAD…VVFYLLIQRK (218 aa). Residues Asn-52 and Asn-163 are each glycosylated (N-linked (GlcNAc...) asparagine). Cys-150 and Cys-164 are disulfide-bonded. Transmembrane regions (helical) follow at residues 241–265, 274–292, and 308–329; these read PLFY…IYFL, CTVA…FLVA, and YLTF…VLNV. Topologically, residues 330 to 476 are cytoplasmic; that stretch reads SLRSPHTHSM…WLLVGRVLDR (147 aa). Residues 477–497 traverse the membrane as a helical segment; the sequence is VCFLAMLSLFICGTAGIFLMA.

This sequence belongs to the ligand-gated ion channel (TC 1.A.9) family. Acetylcholine receptor (TC 1.A.9.1) subfamily. Gamma/CHRNG sub-subfamily. Pentamer of two alpha chains, and one each of the beta, delta, and gamma (in immature muscle) or epsilon (in mature muscle) chains.

The protein localises to the postsynaptic cell membrane. It localises to the cell membrane. It catalyses the reaction K(+)(in) = K(+)(out). It carries out the reaction Na(+)(in) = Na(+)(out). After binding acetylcholine, the AChR responds by an extensive change in conformation that affects all subunits and leads to opening of an ion-conducting channel across the plasma membrane. The sequence is that of Acetylcholine receptor subunit gamma (Chrng) from Rattus norvegicus (Rat).